A 215-amino-acid polypeptide reads, in one-letter code: Cytochrome b6 (215 aa).

A helical membrane pass occupies residues 32-52 (IFYCLGGITLTCFIIQVATGF). Cys35 lines the heme c pocket. Heme b-binding residues include His86 and His100. 3 helical membrane-spanning segments follow: residues 90–110 (ASMM…TGGF), 116–136 (LTWV…VTGY), and 186–206 (LHTF…FLMI). Heme b-binding residues include His187 and His202.

Belongs to the cytochrome b family. PetB subfamily. As to quaternary structure, the 4 large subunits of the cytochrome b6-f complex are cytochrome b6, subunit IV (17 kDa polypeptide, PetD), cytochrome f and the Rieske protein, while the 4 small subunits are PetG, PetL, PetM and PetN. The complex functions as a dimer. Heme b serves as cofactor. Requires heme c as cofactor.

The protein resides in the plastid. Its subcellular location is the chloroplast thylakoid membrane. Its function is as follows. Component of the cytochrome b6-f complex, which mediates electron transfer between photosystem II (PSII) and photosystem I (PSI), cyclic electron flow around PSI, and state transitions. This chain is Cytochrome b6, found in Zygnema circumcarinatum (Green alga).